We begin with the raw amino-acid sequence, 259 residues long: Tryptophan synthase alpha chain (259 aa).

Residues Glu-35 and Asp-46 each act as proton acceptor in the active site.

It belongs to the TrpA family. Tetramer of two alpha and two beta chains.

It carries out the reaction (1S,2R)-1-C-(indol-3-yl)glycerol 3-phosphate + L-serine = D-glyceraldehyde 3-phosphate + L-tryptophan + H2O. It functions in the pathway amino-acid biosynthesis; L-tryptophan biosynthesis; L-tryptophan from chorismate: step 5/5. Its function is as follows. The alpha subunit is responsible for the aldol cleavage of indoleglycerol phosphate to indole and glyceraldehyde 3-phosphate. This Methanococcus maripaludis (strain C5 / ATCC BAA-1333) protein is Tryptophan synthase alpha chain.